The chain runs to 286 residues: Energy-coupling factor transporter ATP-binding protein EcfA2 (286 aa).

The 244-residue stretch at 3–246 (IRFDNVSYTY…KEKLADWHIG (244 aa)) folds into the ABC transporter domain. 40–47 (GQTGSGKS) serves as a coordination point for ATP.

This sequence belongs to the ABC transporter superfamily. Energy-coupling factor EcfA family. As to quaternary structure, forms a stable energy-coupling factor (ECF) transporter complex composed of 2 membrane-embedded substrate-binding proteins (S component), 2 ATP-binding proteins (A component) and 2 transmembrane proteins (T component).

Its subcellular location is the cell membrane. In terms of biological role, ATP-binding (A) component of a common energy-coupling factor (ECF) ABC-transporter complex. Unlike classic ABC transporters this ECF transporter provides the energy necessary to transport a number of different substrates. This Staphylococcus aureus (strain MRSA252) protein is Energy-coupling factor transporter ATP-binding protein EcfA2.